Reading from the N-terminus, the 938-residue chain is Isoleucine--tRNA ligase (938 aa).

The 'HIGH' region signature appears at 58–68 (PYANGSIHIGH). Position 183 is an N6-acetyllysine (Lys183). Position 561 (Glu561) interacts with L-isoleucyl-5'-AMP. The 'KMSKS' region motif lies at 602 to 606 (KMSKS). Lys605 is an ATP binding site. Zn(2+) contacts are provided by Cys901, Cys904, Cys921, and Cys924.

The protein belongs to the class-I aminoacyl-tRNA synthetase family. IleS type 1 subfamily. Monomer. Zn(2+) is required as a cofactor.

It localises to the cytoplasm. The catalysed reaction is tRNA(Ile) + L-isoleucine + ATP = L-isoleucyl-tRNA(Ile) + AMP + diphosphate. Catalyzes the attachment of isoleucine to tRNA(Ile). As IleRS can inadvertently accommodate and process structurally similar amino acids such as valine, to avoid such errors it has two additional distinct tRNA(Ile)-dependent editing activities. One activity is designated as 'pretransfer' editing and involves the hydrolysis of activated Val-AMP. The other activity is designated 'posttransfer' editing and involves deacylation of mischarged Val-tRNA(Ile). In Escherichia coli O127:H6 (strain E2348/69 / EPEC), this protein is Isoleucine--tRNA ligase.